The sequence spans 441 residues: Peroxisomal multifunctional enzyme A (441 aa).

The 3-hydroxyacyl-CoA dehydrogenase stretch occupies residues 1 to 302 (MALNFKDKVV…VNSKPADGES (302 aa)). Residues 11–35 (IVTG…AKVV), Ile-19, Asp-38, 73–74 (SV), and Asn-97 each bind NAD(+). A substrate-binding site is contributed by Ser-149. The active-site Proton acceptor is the Tyr-162. NAD(+) is bound by residues 162–166 (YGSMK) and 194–197 (AASR). Residues 331-440 (ASKIFTTIQG…KLGALMQGSK (110 aa)) enclose the SCP2 domain. Gln-412 contributes to the substrate binding site.

Belongs to the short-chain dehydrogenases/reductases (SDR) family.

It is found in the peroxisome. The catalysed reaction is a (3S)-3-hydroxyacyl-CoA + NAD(+) = a 3-oxoacyl-CoA + NADH + H(+). It functions in the pathway lipid metabolism; fatty acid beta-oxidation. In terms of biological role, enzyme acting on the peroxisomal beta-oxidation pathway for fatty acids. Protects the cells from the increase of the harmful xenobiotic fatty acids incorporated from their diets and optimizes cellular lipid composition for proper development. The polypeptide is Peroxisomal multifunctional enzyme A (mfeA) (Dictyostelium discoideum (Social amoeba)).